The primary structure comprises 140 residues: Mitochondrial import receptor subunit TOM22 homolog (140 aa).

Over residues 1–11 (MAAAAAGPGAP) the composition is skewed to low complexity. Positions 1 to 40 (MAAAAAGPGAPLSADELLPKGDAEKPEEELEEEDDEELDE) are disordered. Residues 1–81 (MAAAAAGPGA…AQKMYRFSRA (81 aa)) lie on the Cytoplasmic side of the membrane. Ser-13 bears the Phosphoserine mark. The span at 25–40 (KPEEELEEEDDEELDE) shows a compositional bias: acidic residues. Residues 39–48 (DETLSERLWG) form an import sequence; necessary for mitochondrion outer membrane localization and integration in the TOM complex region. Position 41 is a phosphothreonine (Thr-41). Ser-43 bears the Phosphoserine mark. The tract at residues 81-101 (AALWIGTTSFMILVLPVVFET) is TMD; necessary for mitochondrion outer membrane localization and integration in the TOM complex. Residues 82–101 (ALWIGTTSFMILVLPVVFET) traverse the membrane as a helical segment. Residues 102-140 (EKLQMEQQQQLQQRQILLGPNTGLSGGMPGALPSLPGKI) lie on the Mitochondrial intermembrane side of the membrane. Residues 121 to 140 (PNTGLSGGMPGALPSLPGKI) are C-tail signal; necessary for mitochondrion outer membrane localization and integration in the TOM complex.

The protein belongs to the Tom22 family. In terms of assembly, forms part of the preprotein translocase complex of the outer mitochondrial membrane (TOM complex) which consists of at least 7 different proteins (TOMM5, TOMM6, TOMM7, TOMM20, TOMM22, TOMM40 and TOMM70). Interacts with PPP2R2B and TOMM40.

The protein localises to the mitochondrion outer membrane. Its function is as follows. Central receptor component of the translocase of the outer membrane of mitochondria (TOM complex) responsible for the recognition and translocation of cytosolically synthesized mitochondrial preproteins. Together with the peripheral receptor TOM20 functions as the transit peptide receptor and facilitates the movement of preproteins into the translocation pore. Required for the translocation across the mitochondrial outer membrane of cytochrome P450 monooxygenases. This Bos taurus (Bovine) protein is Mitochondrial import receptor subunit TOM22 homolog (TOMM22).